We begin with the raw amino-acid sequence, 109 residues long: uncharacterized protein (109 aa).

Positions 1–22 (MKPYSTLFLFTLLTLTTVPAQA) are cleaved as a signal peptide. Residues 39-109 (AYNPDHGRDY…ERRMEDEYGQ (71 aa)) form a disordered region. Basic and acidic residues predominate over residues 41–109 (NPDHGRDYED…ERRMEDEYGQ (69 aa)).

This is an uncharacterized protein from Shigella dysenteriae serotype 1 (strain Sd197).